Reading from the N-terminus, the 449-residue chain is Heterogeneous nuclear ribonucleoprotein H2 (449 aa).

At methionine 1 the chain carries N-acetylmethionine. Methionine 2 bears the N-acetylmethionine; in Heterogeneous nuclear ribonucleoprotein H2, N-terminally processed mark. The 80-residue stretch at 11–90 (FVVKVRGLPW…RYVEVFKSNS (80 aa)) folds into the RRM 1 domain. Serine 23 carries the phosphoserine modification. Lysine 35 participates in a covalent cross-link: Glycyl lysine isopeptide (Lys-Gly) (interchain with G-Cter in SUMO2). Serine 54 and serine 63 each carry phosphoserine. Lysine 87 is covalently cross-linked (Glycyl lysine isopeptide (Lys-Gly) (interchain with G-Cter in SUMO2)). Serine 90 is subject to Phosphoserine. Residue lysine 98 forms a Glycyl lysine isopeptide (Lys-Gly) (interchain with G-Cter in SUMO2) linkage. The 78-residue stretch at 111–188 (GFVRLRGLPF…RYIEIFKSSR (78 aa)) folds into the RRM 2 domain. At arginine 233 the chain carries Dimethylated arginine; alternate. Arginine 233 is subject to Omega-N-methylarginine; alternate. The 1-1 repeat unit spans residues 234–249 (GAYGGGYGGYDDYGGY). Positions 234–433 (GAYGGGYGGY…YGGQSSMSGY (200 aa)) are 2 X 16 AA Gly-rich approximate repeats. Residue tyrosine 246 is modified to Phosphotyrosine. Residues 289–364 (HCVHMRGLPY…RYVELFLNST (76 aa)) form the RRM 3 domain. Serine 310 is subject to Phosphoserine. 3 consecutive repeat copies span residues 354-372 (HRYVELFLNSTAGTSGGAY), 374-392 (HSYVELFLNSTAGASGGAY), and 418-433 (GGYGGGYGGQSSMSGY). The segment at 354–392 (HRYVELFLNSTAGTSGGAYDHSYVELFLNSTAGASGGAY) is 2 X 19 AA perfect repeats.

Component of a ribonucleoprotein complex containing mRNAs and RNA-binding proteins including DDX5, HNRNPH2 and SRSF1 as well as splicing regulator ARVCF. Interacts with TXNL4/DIM1. As to expression, expressed ubiquitously.

The protein resides in the nucleus. It is found in the nucleoplasm. In terms of biological role, this protein is a component of the heterogeneous nuclear ribonucleoprotein (hnRNP) complexes which provide the substrate for the processing events that pre-mRNAs undergo before becoming functional, translatable mRNAs in the cytoplasm. Binds poly(RG). The protein is Heterogeneous nuclear ribonucleoprotein H2 (HNRNPH2) of Homo sapiens (Human).